The chain runs to 876 residues: Alanine--tRNA ligase (876 aa).

4 residues coordinate Zn(2+): His-565, His-569, Cys-667, and His-671.

Belongs to the class-II aminoacyl-tRNA synthetase family. The cofactor is Zn(2+).

The protein resides in the cytoplasm. It catalyses the reaction tRNA(Ala) + L-alanine + ATP = L-alanyl-tRNA(Ala) + AMP + diphosphate. In terms of biological role, catalyzes the attachment of alanine to tRNA(Ala) in a two-step reaction: alanine is first activated by ATP to form Ala-AMP and then transferred to the acceptor end of tRNA(Ala). Also edits incorrectly charged Ser-tRNA(Ala) and Gly-tRNA(Ala) via its editing domain. In Staphylococcus aureus (strain bovine RF122 / ET3-1), this protein is Alanine--tRNA ligase.